A 191-amino-acid polypeptide reads, in one-letter code: Glutathione-dependent formaldehyde-activating enzyme (191 aa).

Residues 22-169 enclose the CENP-V/GFA domain; it reads FAGGTLQCLC…LTELGLTPYD (148 aa). 7 residues coordinate Zn(2+): Cys-29, Cys-31, Cys-50, Cys-52, Cys-55, Cys-97, and Cys-100.

The protein belongs to the Gfa family. Zn(2+) is required as a cofactor.

The enzyme catalyses S-(hydroxymethyl)glutathione = glutathione + formaldehyde. It functions in the pathway one-carbon metabolism; formaldehyde degradation; formate from formaldehyde (glutathione route): step 1/3. Its function is as follows. Catalyzes the condensation of formaldehyde and glutathione to S-hydroxymethylglutathione. In Xanthomonas campestris pv. campestris (strain 8004), this protein is Glutathione-dependent formaldehyde-activating enzyme.